An 89-amino-acid polypeptide reads, in one-letter code: Putative ankyrin repeat protein RF_1157 (89 aa).

An ANK repeat occupies tyrosine 2–leucine 32.

The chain is Putative ankyrin repeat protein RF_1157 from Rickettsia felis (strain ATCC VR-1525 / URRWXCal2) (Rickettsia azadi).